The sequence spans 423 residues: Alpha-1-antichymotrypsin (423 aa).

Residues 1-23 form the signal peptide; it reads MERMLPFLALGLLVAGFCPAVLC. Residues Asn93, Asn106, Asn127, Asn186, and Asn271 are each glycosylated (N-linked (GlcNAc...) asparagine). Positions 369–394 are RCL; it reads GTEASAATAVKITLLSALVDPMTIVR.

This sequence belongs to the serpin family. As to quaternary structure, interacts with DNAJC1. As to expression, plasma.

It localises to the secreted. Its function is as follows. Although its physiological function is unclear, it can inhibit neutrophil cathepsin G and mast cell chymase, both of which can convert angiotensin-1 to the active angiotensin-2. The protein is Alpha-1-antichymotrypsin (SERPINA3) of Pongo abelii (Sumatran orangutan).